We begin with the raw amino-acid sequence, 180 residues long: Large ribosomal subunit protein uL5 (180 aa).

The protein belongs to the universal ribosomal protein uL5 family. Part of the 50S ribosomal subunit; part of the 5S rRNA/L5/L18/L25 subcomplex. Contacts the 5S rRNA and the P site tRNA. Forms a bridge to the 30S subunit in the 70S ribosome.

In terms of biological role, this is one of the proteins that bind and probably mediate the attachment of the 5S RNA into the large ribosomal subunit, where it forms part of the central protuberance. In the 70S ribosome it contacts protein S13 of the 30S subunit (bridge B1b), connecting the 2 subunits; this bridge is implicated in subunit movement. Contacts the P site tRNA; the 5S rRNA and some of its associated proteins might help stabilize positioning of ribosome-bound tRNAs. This chain is Large ribosomal subunit protein uL5, found in Chlamydia pneumoniae (Chlamydophila pneumoniae).